We begin with the raw amino-acid sequence, 556 residues long: Dihydroxy-acid dehydratase (556 aa).

C47 contributes to the [2Fe-2S] cluster binding site. Residue D79 participates in Mg(2+) binding. Residue C120 participates in [2Fe-2S] cluster binding. Positions 121 and 122 each coordinate Mg(2+). Position 122 is an N6-carboxylysine (K122). C192 provides a ligand contact to [2Fe-2S] cluster. A Mg(2+)-binding site is contributed by E444. S470 functions as the Proton acceptor in the catalytic mechanism.

This sequence belongs to the IlvD/Edd family. As to quaternary structure, homodimer. It depends on [2Fe-2S] cluster as a cofactor. Mg(2+) serves as cofactor.

It catalyses the reaction (2R)-2,3-dihydroxy-3-methylbutanoate = 3-methyl-2-oxobutanoate + H2O. It carries out the reaction (2R,3R)-2,3-dihydroxy-3-methylpentanoate = (S)-3-methyl-2-oxopentanoate + H2O. Its pathway is amino-acid biosynthesis; L-isoleucine biosynthesis; L-isoleucine from 2-oxobutanoate: step 3/4. It functions in the pathway amino-acid biosynthesis; L-valine biosynthesis; L-valine from pyruvate: step 3/4. Its function is as follows. Functions in the biosynthesis of branched-chain amino acids. Catalyzes the dehydration of (2R,3R)-2,3-dihydroxy-3-methylpentanoate (2,3-dihydroxy-3-methylvalerate) into 2-oxo-3-methylpentanoate (2-oxo-3-methylvalerate) and of (2R)-2,3-dihydroxy-3-methylbutanoate (2,3-dihydroxyisovalerate) into 2-oxo-3-methylbutanoate (2-oxoisovalerate), the penultimate precursor to L-isoleucine and L-valine, respectively. This Prochlorococcus marinus (strain MIT 9303) protein is Dihydroxy-acid dehydratase.